Reading from the N-terminus, the 331-residue chain is Zinc finger CW-type PWWP domain protein 2 homolog (331 aa).

The segment at 9–64 (EFVHRTWVQCENESCLKWRLLSPAAAAAVNPSEPWYCFMNTDPSYSSCSVSEEDFP) adopts a CW-type zinc-finger fold. Residues cysteine 18, cysteine 23, cysteine 45, and cysteine 56 each coordinate Zn(2+). The 65-residue stretch at 83-147 (LGSLVLVKLR…AAFVGHFSLT (65 aa)) folds into the PWWP domain. Positions 264–295 (IQEPTAREDESQGEQLSQCSPESPTGSPFQSY) are disordered. A compositionally biased stretch (polar residues) spans 276 to 293 (GEQLSQCSPESPTGSPFQ).

Histone methylation reader which binds to non-methylated (H3K4me0), monomethylated (H3K4me1), dimethylated (H3K4me2) and trimethylated (H3K4me3) 'Lys-4' on histone H3. The order of binding preference is H3K4me3 &gt; H3K4me2 &gt; H3K4me1 &gt; H3K4me0. The polypeptide is Zinc finger CW-type PWWP domain protein 2 homolog (Zcwpw2) (Mus musculus (Mouse)).